Here is a 54-residue protein sequence, read N- to C-terminus: ATP synthase protein 8 (54 aa).

A helical transmembrane segment spans residues 8–28; the sequence is WWLLNFFLGWTSLLVIFIILL.

It belongs to the ATPase protein 8 family. In terms of assembly, F-type ATPases have 2 components, CF(1) - the catalytic core - and CF(0) - the membrane proton channel.

The protein localises to the mitochondrion membrane. In terms of biological role, mitochondrial membrane ATP synthase (F(1)F(0) ATP synthase or Complex V) produces ATP from ADP in the presence of a proton gradient across the membrane which is generated by electron transport complexes of the respiratory chain. F-type ATPases consist of two structural domains, F(1) - containing the extramembraneous catalytic core and F(0) - containing the membrane proton channel, linked together by a central stalk and a peripheral stalk. During catalysis, ATP synthesis in the catalytic domain of F(1) is coupled via a rotary mechanism of the central stalk subunits to proton translocation. Part of the complex F(0) domain. Minor subunit located with subunit a in the membrane. This chain is ATP synthase protein 8 (MT-ATP8), found in Patiria pectinifera (Starfish).